A 116-amino-acid chain; its full sequence is Omega-ctenitoxin-Pn3a (116 aa).

The first 19 residues, 1 to 19 (MKMKLLGIILLVSFPFVLG), serve as a signal peptide directing secretion. The propeptide occupies 20–38 (FAGIPIEEGENSVEVGEVE). Disulfide bonds link C41/C58, C48/C64, C55/C90, C57/C78, C66/C76, C96/C102, and C106/C111. H115 carries the post-translational modification Histidine amide.

This sequence belongs to the neurotoxin 04 (omega-agtx) family. 03 (type II/III omega-agtx) subfamily. As to expression, expressed by the venom gland.

The protein resides in the secreted. In terms of biological role, this toxin is a potent and practically irreversible antagonist of both Cav2.1/CACNA1A and Cav2.2/CACNA1B calcium channels, while it displays a partial and rapidly reversible block of Cav2.3/CACNA1E calcium channels and no effect on Cav3/CACNA1 calcium channels. Inhibits glutamate uptake from rat brain synaptosomes by an interaction between cysteines from both glutamate transporter and toxin. Blocks potassium-induced exocytosis of synaptic vesicles in brain cortical synaptosomes (IC(50)=1.1 nM). In rat brain, inhibits glutamate release, neuronal death and loss of neurotransmission in the hippocampus resulting from ischemia. In vivo, induces rapid general flaccid paralysis followed by death in 10-30 minutes at dose levels of 5 ug per mouse. In Phoneutria nigriventer (Brazilian armed spider), this protein is Omega-ctenitoxin-Pn3a.